We begin with the raw amino-acid sequence, 120 residues long: Holo-[acyl-carrier-protein] synthase (120 aa).

2 residues coordinate Mg(2+): Asp-8 and Glu-58.

Belongs to the P-Pant transferase superfamily. AcpS family. It depends on Mg(2+) as a cofactor.

The protein localises to the cytoplasm. The enzyme catalyses apo-[ACP] + CoA = holo-[ACP] + adenosine 3',5'-bisphosphate + H(+). Its function is as follows. Transfers the 4'-phosphopantetheine moiety from coenzyme A to a Ser of acyl-carrier-protein. This chain is Holo-[acyl-carrier-protein] synthase, found in Streptococcus pneumoniae (strain Hungary19A-6).